The sequence spans 221 residues: FMN-dependent NADH:quinone oxidoreductase 1 (221 aa).

FMN contacts are provided by residues Ser-17–Ser-19 and Ser-148–Gly-151.

This sequence belongs to the azoreductase type 1 family. In terms of assembly, homodimer. Requires FMN as cofactor.

The catalysed reaction is 2 a quinone + NADH + H(+) = 2 a 1,4-benzosemiquinone + NAD(+). It carries out the reaction N,N-dimethyl-1,4-phenylenediamine + anthranilate + 2 NAD(+) = 2-(4-dimethylaminophenyl)diazenylbenzoate + 2 NADH + 2 H(+). Functionally, quinone reductase that provides resistance to thiol-specific stress caused by electrophilic quinones. Its function is as follows. Also exhibits azoreductase activity. Catalyzes the reductive cleavage of the azo bond in aromatic azo compounds to the corresponding amines. In Clostridium acetobutylicum (strain ATCC 824 / DSM 792 / JCM 1419 / IAM 19013 / LMG 5710 / NBRC 13948 / NRRL B-527 / VKM B-1787 / 2291 / W), this protein is FMN-dependent NADH:quinone oxidoreductase 1.